Consider the following 102-residue polypeptide: Aspartyl/glutamyl-tRNA(Asn/Gln) amidotransferase subunit C (102 aa).

Belongs to the GatC family. In terms of assembly, heterotrimer of A, B and C subunits.

It catalyses the reaction L-glutamyl-tRNA(Gln) + L-glutamine + ATP + H2O = L-glutaminyl-tRNA(Gln) + L-glutamate + ADP + phosphate + H(+). The catalysed reaction is L-aspartyl-tRNA(Asn) + L-glutamine + ATP + H2O = L-asparaginyl-tRNA(Asn) + L-glutamate + ADP + phosphate + 2 H(+). Its function is as follows. Allows the formation of correctly charged Asn-tRNA(Asn) or Gln-tRNA(Gln) through the transamidation of misacylated Asp-tRNA(Asn) or Glu-tRNA(Gln) in organisms which lack either or both of asparaginyl-tRNA or glutaminyl-tRNA synthetases. The reaction takes place in the presence of glutamine and ATP through an activated phospho-Asp-tRNA(Asn) or phospho-Glu-tRNA(Gln). The polypeptide is Aspartyl/glutamyl-tRNA(Asn/Gln) amidotransferase subunit C (Bordetella petrii (strain ATCC BAA-461 / DSM 12804 / CCUG 43448)).